We begin with the raw amino-acid sequence, 320 residues long: UPF0053 protein in cps region (320 aa).

The helical transmembrane segment at 4 to 24 (CLSFLLMIGFSLIAEGFSFII) threads the bilayer. 2 CBS domains span residues 121-183 (MTSR…PLDL) and 186-244 (LVRQ…PNEV).

The protein belongs to the UPF0053 family.

Its subcellular location is the cell membrane. This is UPF0053 protein in cps region from Klebsiella pneumoniae.